A 133-amino-acid polypeptide reads, in one-letter code: MQRVTITLDDDLLETLDSLSQRRGYNNRSEAIRDILRSALAQEATQQHGTQGFAVLSYVYEHEKRDLASRIVATQHHHHDLSVATLHVHINHDDCLEIAVLKGDMGDVQHFADDVIAQRGVRHGHLQCLPKED.

4 residues coordinate Ni(2+): H76, H87, H89, and C95.

This sequence belongs to the transcriptional regulatory CopG/NikR family. Homotetramer. It depends on Ni(2+) as a cofactor.

Functionally, transcriptional repressor of the nikABCDE operon. Is active in the presence of excessive concentrations of intracellular nickel. This chain is Nickel-responsive regulator, found in Escherichia coli O6:K15:H31 (strain 536 / UPEC).